Reading from the N-terminus, the 352-residue chain is Ribosome biogenesis protein BRX1 homolog (352 aa).

Residues 1–55 (MGKFSKIKKVQEEESAHQKMEWEAAGAKDSSSDDSSDESDNDDQPKQATEETRKR) form a disordered region. Over residues 9–22 (KVQEEESAHQKMEW) the composition is skewed to basic and acidic residues. A compositionally biased stretch (acidic residues) spans 32–42 (SDDSSDESDND). Residues 43–55 (DQPKQATEETRKR) show a composition bias toward basic and acidic residues. A Brix domain is found at 63-253 (ERVLVLCSRG…MVRLFAGSFE (191 aa)).

It belongs to the BRX1 family.

It is found in the nucleus. The protein resides in the nucleolus. Functionally, required for biogenesis of the 60S ribosomal subunit. This chain is Ribosome biogenesis protein BRX1 homolog, found in Caenorhabditis elegans.